The chain runs to 319 residues: Beta-ketoacyl-[acyl-carrier-protein] synthase III (319 aa).

Catalysis depends on residues Cys113 and His246. Residues Gln247 to Arg251 are ACP-binding. Asn276 is an active-site residue.

This sequence belongs to the thiolase-like superfamily. FabH family. As to quaternary structure, homodimer.

It is found in the cytoplasm. The enzyme catalyses malonyl-[ACP] + acetyl-CoA + H(+) = 3-oxobutanoyl-[ACP] + CO2 + CoA. The protein operates within lipid metabolism; fatty acid biosynthesis. Catalyzes the condensation reaction of fatty acid synthesis by the addition to an acyl acceptor of two carbons from malonyl-ACP. Catalyzes the first condensation reaction which initiates fatty acid synthesis and may therefore play a role in governing the total rate of fatty acid production. Possesses both acetoacetyl-ACP synthase and acetyl transacylase activities. Its substrate specificity determines the biosynthesis of branched-chain and/or straight-chain of fatty acids. This chain is Beta-ketoacyl-[acyl-carrier-protein] synthase III, found in Ehrlichia chaffeensis (strain ATCC CRL-10679 / Arkansas).